Consider the following 109-residue polypeptide: uncharacterized protein (109 aa).

2 consecutive transmembrane segments (helical) span residues 19–39 and 53–73; these read LELV…CLIP and YFID…FYPF.

Its subcellular location is the membrane. This is an uncharacterized protein from Saccharomyces cerevisiae (strain ATCC 204508 / S288c) (Baker's yeast).